The chain runs to 223 residues: N-terminal Xaa-Pro-Lys N-methyltransferase 1 (223 aa).

An N-acetylmethionine modification is found at methionine 1. Threonine 2 bears the N-acetylthreonine; in N-terminal Xaa-Pro-Lys N-methyltransferase 1, N-terminally processed mark. Residues glycine 69, arginine 74, 91-93, 119-120, and glutamine 135 contribute to the S-adenosyl-L-methionine site; these read DVT and LQ.

This sequence belongs to the methyltransferase superfamily. NTM1 family.

It localises to the nucleus. It carries out the reaction N-terminal L-alanyl-L-prolyl-L-lysyl-[protein] + 3 S-adenosyl-L-methionine = N-terminal N,N,N-trimethyl-L-alanyl-L-prolyl-L-lysyl-[protein] + 3 S-adenosyl-L-homocysteine + 3 H(+). The catalysed reaction is N-terminal L-seryl-L-prolyl-L-lysyl-[protein] + 3 S-adenosyl-L-methionine = N-terminal N,N,N-trimethyl-L-seryl-L-prolyl-L-lysyl-[protein] + 3 S-adenosyl-L-homocysteine + 3 H(+). It catalyses the reaction N-terminal L-prolyl-L-prolyl-L-lysyl-[protein] + 2 S-adenosyl-L-methionine = N-terminal N,N-dimethyl-L-prolyl-L-prolyl-L-lysyl-[protein] + 2 S-adenosyl-L-homocysteine + 2 H(+). Functionally, distributive alpha-N-methyltransferase that methylates the N-terminus of target proteins containing the N-terminal motif [Ala/Gly/Pro/Ser]-Pro-Lys when the initiator Met is cleaved. Specifically catalyzes mono-, di- or tri-methylation of the exposed alpha-amino group of the Ala, Gly or Ser residue in the [Ala/Gly/Ser]-Pro-Lys motif and mono- or di-methylation of Pro in the Pro-Pro-Lys motif. Some of the substrates may be primed by NTMT2-mediated monomethylation. Catalyzes the trimethylation of the N-terminal Gly in CENPA (after removal of Met-1). Responsible for the N-terminal methylation of KLHL31, MYL2, MYL3, RB1, RCC1, RPL23A and SET. Required during mitosis for normal bipolar spindle formation and chromosome segregation via its action on RCC1. In Ailuropoda melanoleuca (Giant panda), this protein is N-terminal Xaa-Pro-Lys N-methyltransferase 1 (NTMT1).